The sequence spans 208 residues: Sodium/potassium-transporting ATPase subunit beta-1-interacting protein 4 (208 aa).

3 helical membrane-spanning segments follow: residues A35 to I55, V62 to F82, and C151 to F171.

Belongs to the NKAIN family. Interacts with ATP1B1.

The protein resides in the cell membrane. In Homo sapiens (Human), this protein is Sodium/potassium-transporting ATPase subunit beta-1-interacting protein 4 (NKAIN4).